A 243-amino-acid polypeptide reads, in one-letter code: tRNA (guanine-N(1)-)-methyltransferase (243 aa).

S-adenosyl-L-methionine is bound by residues Gly108 and 127 to 132 (LGDFVL).

Belongs to the RNA methyltransferase TrmD family. Homodimer.

It localises to the cytoplasm. The catalysed reaction is guanosine(37) in tRNA + S-adenosyl-L-methionine = N(1)-methylguanosine(37) in tRNA + S-adenosyl-L-homocysteine + H(+). Specifically methylates guanosine-37 in various tRNAs. In Streptococcus pyogenes serotype M5 (strain Manfredo), this protein is tRNA (guanine-N(1)-)-methyltransferase.